A 420-amino-acid polypeptide reads, in one-letter code: Serine palmitoyltransferase (420 aa).

The segment covering 1–21 (MKHNLQDNLQGEQMANTNSNG) has biased composition (polar residues). A disordered region spans residues 1–25 (MKHNLQDNLQGEQMANTNSNGGKKP). Pyridoxal 5'-phosphate-binding positions include 132-133 (GM), H233, T261, and S263. K264 carries the N6-(pyridoxal phosphate)lysine modification.

The protein belongs to the class-II pyridoxal-phosphate-dependent aminotransferase family. Homodimer. The cofactor is pyridoxal 5'-phosphate.

The protein localises to the cytoplasm. Its subcellular location is the cell inner membrane. The catalysed reaction is L-serine + hexadecanoyl-CoA + H(+) = 3-oxosphinganine + CO2 + CoA. It participates in lipid metabolism; sphingolipid metabolism. With respect to regulation, significantly inhibited by palmitoyl-CoA concentrations greater than 100 uM. Its function is as follows. Catalyzes the condensation of L-serine with palmitoyl-CoA (hexadecanoyl-CoA) to produce 3-oxosphinganine. The sequence is that of Serine palmitoyltransferase from Bacteriovorax stolpii (Bdellovibrio stolpii).